The primary structure comprises 402 residues: UPF0261 protein BP1203 (402 aa).

This sequence belongs to the UPF0261 family.

This is UPF0261 protein BP1203 from Bordetella pertussis (strain Tohama I / ATCC BAA-589 / NCTC 13251).